The sequence spans 375 residues: Holliday junction branch migration complex subunit RuvB (375 aa).

Positions Met1–Lys22 are enriched in polar residues. A disordered region spans residues Met1–Ala44. The interval Asp13–Tyr218 is large ATPase domain (RuvB-L). ATP-binding positions include Leu57, Arg58, Gly99, Lys102, Thr103, Thr104, Glu165 to Phe167, Arg208, Tyr218, and Arg255. Thr103 provides a ligand contact to Mg(2+). A small ATPAse domain (RuvB-S) region spans residues Glu219–Asn289. The interval Pro292–Ser375 is head domain (RuvB-H). DNA-binding residues include Arg347 and Arg352.

The protein belongs to the RuvB family. In terms of assembly, homohexamer. Forms an RuvA(8)-RuvB(12)-Holliday junction (HJ) complex. HJ DNA is sandwiched between 2 RuvA tetramers; dsDNA enters through RuvA and exits via RuvB. An RuvB hexamer assembles on each DNA strand where it exits the tetramer. Each RuvB hexamer is contacted by two RuvA subunits (via domain III) on 2 adjacent RuvB subunits; this complex drives branch migration. In the full resolvosome a probable DNA-RuvA(4)-RuvB(12)-RuvC(2) complex forms which resolves the HJ.

It localises to the cytoplasm. The enzyme catalyses ATP + H2O = ADP + phosphate + H(+). In terms of biological role, the RuvA-RuvB-RuvC complex processes Holliday junction (HJ) DNA during genetic recombination and DNA repair, while the RuvA-RuvB complex plays an important role in the rescue of blocked DNA replication forks via replication fork reversal (RFR). RuvA specifically binds to HJ cruciform DNA, conferring on it an open structure. The RuvB hexamer acts as an ATP-dependent pump, pulling dsDNA into and through the RuvAB complex. RuvB forms 2 homohexamers on either side of HJ DNA bound by 1 or 2 RuvA tetramers; 4 subunits per hexamer contact DNA at a time. Coordinated motions by a converter formed by DNA-disengaged RuvB subunits stimulates ATP hydrolysis and nucleotide exchange. Immobilization of the converter enables RuvB to convert the ATP-contained energy into a lever motion, pulling 2 nucleotides of DNA out of the RuvA tetramer per ATP hydrolyzed, thus driving DNA branch migration. The RuvB motors rotate together with the DNA substrate, which together with the progressing nucleotide cycle form the mechanistic basis for DNA recombination by continuous HJ branch migration. Branch migration allows RuvC to scan DNA until it finds its consensus sequence, where it cleaves and resolves cruciform DNA. The chain is Holliday junction branch migration complex subunit RuvB from Acaryochloris marina (strain MBIC 11017).